The primary structure comprises 156 residues: NAD(P)H-quinone oxidoreductase subunit N (156 aa).

This sequence belongs to the complex I NdhN subunit family. As to quaternary structure, NDH-1 can be composed of about 15 different subunits; different subcomplexes with different compositions have been identified which probably have different functions.

Its subcellular location is the cellular thylakoid membrane. It catalyses the reaction a plastoquinone + NADH + (n+1) H(+)(in) = a plastoquinol + NAD(+) + n H(+)(out). It carries out the reaction a plastoquinone + NADPH + (n+1) H(+)(in) = a plastoquinol + NADP(+) + n H(+)(out). In terms of biological role, NDH-1 shuttles electrons from an unknown electron donor, via FMN and iron-sulfur (Fe-S) centers, to quinones in the respiratory and/or the photosynthetic chain. The immediate electron acceptor for the enzyme in this species is believed to be plastoquinone. Couples the redox reaction to proton translocation, and thus conserves the redox energy in a proton gradient. Cyanobacterial NDH-1 also plays a role in inorganic carbon-concentration. The polypeptide is NAD(P)H-quinone oxidoreductase subunit N (Prochlorococcus marinus (strain MIT 9515)).